The primary structure comprises 121 residues: Type II secretion system protein I (121 aa).

The propeptide at Met1 to Gly6 is leader sequence. Residue Met7 is modified to N-methylmethionine. Residues Met7–Leu27 form a helical membrane-spanning segment.

It belongs to the GSP I family. As to quaternary structure, type II secretion is composed of four main components: the outer membrane complex, the inner membrane complex, the cytoplasmic secretion ATPase and the periplasm-spanning pseudopilus. Interacts with core component PulG. Interacts with pseudopilins PulJ and PulK. Cleaved by prepilin peptidase. Post-translationally, methylated by prepilin peptidase at the amino group of the N-terminal methionine once the leader sequence is cleaved by prepilin peptidase.

Its subcellular location is the cell inner membrane. Component of the type II secretion system required for the energy-dependent secretion of extracellular factors such as proteases and toxins from the periplasm. Part of the pseudopilus tip complex that is critical for the recognition and binding of secretion substrates. This is Type II secretion system protein I (pulI) from Klebsiella michiganensis (strain ATCC 8724 / DSM 4798 / JCM 20051 / NBRC 3318 / NRRL B-199 / KCTC 1686 / BUCSAV 143 / CCM 1901).